Here is a 323-residue protein sequence, read N- to C-terminus: Aspartate carbamoyltransferase catalytic subunit (323 aa).

Carbamoyl phosphate contacts are provided by Arg-71 and Thr-72. Lys-99 is an L-aspartate binding site. Carbamoyl phosphate contacts are provided by Arg-121, His-151, and Gln-154. L-aspartate contacts are provided by Arg-184 and Arg-239. 2 residues coordinate carbamoyl phosphate: Gly-280 and Pro-281.

It belongs to the aspartate/ornithine carbamoyltransferase superfamily. ATCase family. As to quaternary structure, heterododecamer (2C3:3R2) of six catalytic PyrB chains organized as two trimers (C3), and six regulatory PyrI chains organized as three dimers (R2).

It carries out the reaction carbamoyl phosphate + L-aspartate = N-carbamoyl-L-aspartate + phosphate + H(+). It functions in the pathway pyrimidine metabolism; UMP biosynthesis via de novo pathway; (S)-dihydroorotate from bicarbonate: step 2/3. Catalyzes the condensation of carbamoyl phosphate and aspartate to form carbamoyl aspartate and inorganic phosphate, the committed step in the de novo pyrimidine nucleotide biosynthesis pathway. This Cupriavidus pinatubonensis (strain JMP 134 / LMG 1197) (Cupriavidus necator (strain JMP 134)) protein is Aspartate carbamoyltransferase catalytic subunit.